Reading from the N-terminus, the 521-residue chain is ATP synthase subunit beta (521 aa).

2 stretches are compositionally biased toward low complexity: residues 1-21 (MAKAATPKTTAAAEAKPAAKA) and 28-42 (PKTTAAAKPAATKSG). The interval 1–42 (MAKAATPKTTAAAEAKPAAKAPAKKAAPKTTAAAKPAATKSG) is disordered. Position 199–206 (199–206 (GGAGVGKT)) interacts with ATP.

The protein belongs to the ATPase alpha/beta chains family. As to quaternary structure, F-type ATPases have 2 components, CF(1) - the catalytic core - and CF(0) - the membrane proton channel. CF(1) has five subunits: alpha(3), beta(3), gamma(1), delta(1), epsilon(1). CF(0) has three main subunits: a(1), b(2) and c(9-12). The alpha and beta chains form an alternating ring which encloses part of the gamma chain. CF(1) is attached to CF(0) by a central stalk formed by the gamma and epsilon chains, while a peripheral stalk is formed by the delta and b chains.

The protein resides in the cell inner membrane. The catalysed reaction is ATP + H2O + 4 H(+)(in) = ADP + phosphate + 5 H(+)(out). Its function is as follows. Produces ATP from ADP in the presence of a proton gradient across the membrane. The catalytic sites are hosted primarily by the beta subunits. The sequence is that of ATP synthase subunit beta from Brucella abortus (strain 2308).